A 107-amino-acid chain; its full sequence is Anti-adapter protein IraM (107 aa).

It belongs to the IraM/RssC family.

Its subcellular location is the cytoplasm. In terms of biological role, inhibits RpoS proteolysis by regulating RssB activity, thereby increasing the stability of the sigma stress factor RpoS during magnesium starvation. This Escherichia coli (strain K12 / MC4100 / BW2952) protein is Anti-adapter protein IraM.